A 437-amino-acid chain; its full sequence is CCA-adding enzyme (437 aa).

2 residues coordinate ATP: S47 and R50. Positions 47 and 50 each coordinate CTP. E59, D61, and D110 together coordinate Mg(2+). ATP is bound by residues H133, K152, and Y161. CTP-binding residues include H133, K152, and Y161.

The protein belongs to the tRNA nucleotidyltransferase/poly(A) polymerase family. Archaeal CCA-adding enzyme subfamily. As to quaternary structure, homodimer. The cofactor is Mg(2+).

The catalysed reaction is a tRNA precursor + 2 CTP + ATP = a tRNA with a 3' CCA end + 3 diphosphate. It carries out the reaction a tRNA with a 3' CCA end + 2 CTP + ATP = a tRNA with a 3' CCACCA end + 3 diphosphate. Catalyzes the addition and repair of the essential 3'-terminal CCA sequence in tRNAs without using a nucleic acid template. Adds these three nucleotides in the order of C, C, and A to the tRNA nucleotide-73, using CTP and ATP as substrates and producing inorganic pyrophosphate. tRNA 3'-terminal CCA addition is required both for tRNA processing and repair. Also involved in tRNA surveillance by mediating tandem CCA addition to generate a CCACCA at the 3' terminus of unstable tRNAs. While stable tRNAs receive only 3'-terminal CCA, unstable tRNAs are marked with CCACCA and rapidly degraded. The structural flexibility of RNA controls the choice between CCA versus CCACCA addition: following the first CCA addition cycle, nucleotide-binding to the active site triggers a clockwise screw motion, producing torque on the RNA. This ejects stable RNAs, whereas unstable RNAs are refolded while bound to the enzyme and subjected to a second CCA catalytic cycle. In Archaeoglobus fulgidus (strain ATCC 49558 / DSM 4304 / JCM 9628 / NBRC 100126 / VC-16), this protein is CCA-adding enzyme.